The primary structure comprises 253 residues: Phycoerythrobilin:ferredoxin oxidoreductase (253 aa).

This sequence belongs to the HY2 family.

It catalyses the reaction (3Z)-phycoerythrobilin + oxidized 2[4Fe-4S]-[ferredoxin] = 15,16-dihydrobiliverdin + reduced 2[4Fe-4S]-[ferredoxin] + 2 H(+). Catalyzes the two-electron reduction of the C2 and C3(1) diene system of 15,16-dihydrobiliverdin. The sequence is that of Phycoerythrobilin:ferredoxin oxidoreductase (pebB) from Prochlorococcus marinus (strain MIT 9215).